The primary structure comprises 603 residues: Pyruvate decarboxylase 4 (603 aa).

Positions 65 and 152 each coordinate substrate. The segment at 430–512 (DSWFNCQKLK…FLINNGGYTI (83 aa)) is thiamine pyrophosphate binding. Residues Asp-480, Asn-507, and Gly-509 each coordinate Mg(2+). A substrate-binding site is contributed by Glu-513.

It belongs to the TPP enzyme family. Homotetramer. Requires a metal cation as cofactor. The cofactor is thiamine diphosphate. In terms of tissue distribution, expressed in shoots and at lowe levels in roots, flowers and siliques.

The enzyme catalyses a 2-oxocarboxylate + H(+) = an aldehyde + CO2. The polypeptide is Pyruvate decarboxylase 4 (PDC4) (Arabidopsis thaliana (Mouse-ear cress)).